Here is a 901-residue protein sequence, read N- to C-terminus: Alanine--tRNA ligase (901 aa).

Histidine 600, histidine 604, cysteine 704, and histidine 708 together coordinate Zn(2+).

It belongs to the class-II aminoacyl-tRNA synthetase family. Zn(2+) is required as a cofactor.

The protein resides in the cytoplasm. The enzyme catalyses tRNA(Ala) + L-alanine + ATP = L-alanyl-tRNA(Ala) + AMP + diphosphate. In terms of biological role, catalyzes the attachment of alanine to tRNA(Ala) in a two-step reaction: alanine is first activated by ATP to form Ala-AMP and then transferred to the acceptor end of tRNA(Ala). Also edits incorrectly charged Ser-tRNA(Ala) and Gly-tRNA(Ala) via its editing domain. The chain is Alanine--tRNA ligase from Ignicoccus hospitalis (strain KIN4/I / DSM 18386 / JCM 14125).